A 602-amino-acid chain; its full sequence is Elongation factor 4 (602 aa).

Positions 7-189 constitute a tr-type G domain; that stretch reads KFIRNFSIIA…QLVVAIPPPV (183 aa). GTP is bound by residues 19–24 and 136–139; these read DHGKST and NKID.

Belongs to the TRAFAC class translation factor GTPase superfamily. Classic translation factor GTPase family. LepA subfamily.

It localises to the cell inner membrane. It carries out the reaction GTP + H2O = GDP + phosphate + H(+). In terms of biological role, required for accurate and efficient protein synthesis under certain stress conditions. May act as a fidelity factor of the translation reaction, by catalyzing a one-codon backward translocation of tRNAs on improperly translocated ribosomes. Back-translocation proceeds from a post-translocation (POST) complex to a pre-translocation (PRE) complex, thus giving elongation factor G a second chance to translocate the tRNAs correctly. Binds to ribosomes in a GTP-dependent manner. This Coxiella burnetii (strain RSA 493 / Nine Mile phase I) protein is Elongation factor 4.